The following is a 305-amino-acid chain: uncharacterized protein (305 aa).

3 helical membrane-spanning segments follow: residues 52–72 (TINLTSAIIILVVGMFISKII), 89–109 (IAGFLSALMRYIIITFTFIAA), and 120–140 (VIAILGAAGMAIGLALQGSLS).

Belongs to the MscS (TC 1.A.23) family.

It localises to the cell membrane. This is an uncharacterized protein from Buchnera aphidicola subsp. Acyrthosiphon pisum (strain APS) (Acyrthosiphon pisum symbiotic bacterium).